The chain runs to 436 residues: S-locus-specific glycoprotein S6 (436 aa).

Positions 1–31 (MKGVRKPYDNSYTLSFLLVFFVLILFCPAFS) are cleaved as a signal peptide. Residues 34-156 (TLSSTESLRI…SNNDASEYLW (123 aa)) enclose the Bulb-type lectin domain. N-linked (GlcNAc...) asparagine glycosylation is found at asparagine 46, asparagine 64, asparagine 114, asparagine 121, asparagine 245, asparagine 261, and asparagine 390. One can recognise a PAN domain in the interval 351–431 (CSGDGFTRMK…HGQDLYVRLA (81 aa)). Intrachain disulfides connect cysteine 381–cysteine 406 and cysteine 389–cysteine 391.

Stigma.

Involved in sporophytic self-incompatibility system (the inability of flowering plants to achieve self-fertilization). The polypeptide is S-locus-specific glycoprotein S6 (SLSG) (Brassica oleracea (Wild cabbage)).